The primary structure comprises 631 residues: 1-deoxy-D-xylulose-5-phosphate synthase (631 aa).

Thiamine diphosphate is bound by residues His87 and 128-130 (GHS). A Mg(2+)-binding site is contributed by Asp159. Thiamine diphosphate-binding positions include 160-161 (GA), Asn188, Phe295, and Glu377. Asn188 is a Mg(2+) binding site.

It belongs to the transketolase family. DXPS subfamily. Homodimer. Mg(2+) serves as cofactor. Requires thiamine diphosphate as cofactor.

It catalyses the reaction D-glyceraldehyde 3-phosphate + pyruvate + H(+) = 1-deoxy-D-xylulose 5-phosphate + CO2. Its pathway is metabolic intermediate biosynthesis; 1-deoxy-D-xylulose 5-phosphate biosynthesis; 1-deoxy-D-xylulose 5-phosphate from D-glyceraldehyde 3-phosphate and pyruvate: step 1/1. Its function is as follows. Catalyzes the acyloin condensation reaction between C atoms 2 and 3 of pyruvate and glyceraldehyde 3-phosphate to yield 1-deoxy-D-xylulose-5-phosphate (DXP). The protein is 1-deoxy-D-xylulose-5-phosphate synthase of Pseudomonas putida (strain W619).